Reading from the N-terminus, the 279-residue chain is Proteasome subunit beta (279 aa).

Residues 1 to 51 constitute a propeptide, removed in mature form; by autocatalysis; sequence MTFDASGRLPEAFLTPGGSSFMDFLAGHAPDLLPGRRSLGTGDLSKDVPHG. Catalysis depends on Thr52, which acts as the Nucleophile.

The protein belongs to the peptidase T1B family. The 20S proteasome core is composed of 14 alpha and 14 beta subunits that assemble into four stacked heptameric rings, resulting in a barrel-shaped structure. The two inner rings, each composed of seven catalytic beta subunits, are sandwiched by two outer rings, each composed of seven alpha subunits. The catalytic chamber with the active sites is on the inside of the barrel. Has a gated structure, the ends of the cylinder being occluded by the N-termini of the alpha-subunits. Is capped by the proteasome-associated ATPase, ARC.

It is found in the cytoplasm. It catalyses the reaction Cleavage of peptide bonds with very broad specificity.. It functions in the pathway protein degradation; proteasomal Pup-dependent pathway. The formation of the proteasomal ATPase ARC-20S proteasome complex, likely via the docking of the C-termini of ARC into the intersubunit pockets in the alpha-rings, may trigger opening of the gate for substrate entry. Interconversion between the open-gate and close-gate conformations leads to a dynamic regulation of the 20S proteasome proteolysis activity. Component of the proteasome core, a large protease complex with broad specificity involved in protein degradation. The polypeptide is Proteasome subunit beta (Kribbella flavida (strain DSM 17836 / JCM 10339 / NBRC 14399)).